Here is a 906-residue protein sequence, read N- to C-terminus: Protein translocase subunit SecA (906 aa).

ATP contacts are provided by residues Gln87, 105-109 (GEGKT), and Asp521. Positions 849 to 865 (STATAAEPAPEASQSQS) are enriched in low complexity. The interval 849–897 (STATAAEPAPEASQSQSTNDATASQNPPITEVEASKVGRNQPCPCGSGK) is disordered. The segment covering 866-876 (TNDATASQNPP) has biased composition (polar residues). 4 residues coordinate Zn(2+): Cys891, Cys893, Cys902, and Cys903.

It belongs to the SecA family. In terms of assembly, monomer and homodimer. Part of the essential Sec protein translocation apparatus which comprises SecA, SecYEG and auxiliary proteins SecDF-YajC and YidC. The cofactor is Zn(2+).

It localises to the cell inner membrane. The protein resides in the cytoplasm. The catalysed reaction is ATP + H2O + cellular proteinSide 1 = ADP + phosphate + cellular proteinSide 2.. Functionally, part of the Sec protein translocase complex. Interacts with the SecYEG preprotein conducting channel. Has a central role in coupling the hydrolysis of ATP to the transfer of proteins into and across the cell membrane, serving both as a receptor for the preprotein-SecB complex and as an ATP-driven molecular motor driving the stepwise translocation of polypeptide chains across the membrane. The polypeptide is Protein translocase subunit SecA (Dichelobacter nodosus (strain VCS1703A)).